A 258-amino-acid chain; its full sequence is Small ribosomal subunit protein uS2 (258 aa).

Belongs to the universal ribosomal protein uS2 family.

This is Small ribosomal subunit protein uS2 from Leuconostoc citreum (strain KM20).